The sequence spans 420 residues: Adenylosuccinate synthetase (420 aa).

Residues 11–17 (GDEGKGK) and 39–41 (GHT) each bind GTP. The Proton acceptor role is filled by aspartate 12. Mg(2+) contacts are provided by aspartate 12 and glycine 39. IMP contacts are provided by residues 12–15 (DEGK), 37–40 (NAGH), threonine 129, arginine 143, asparagine 218, threonine 233, and arginine 297. Histidine 40 functions as the Proton donor in the catalytic mechanism. Residue 293 to 299 (VTTGRKR) coordinates substrate. GTP is bound by residues arginine 299, 325-327 (KLD), and 407-409 (GTG).

Belongs to the adenylosuccinate synthetase family. Homodimer. Mg(2+) is required as a cofactor.

The protein resides in the cytoplasm. The enzyme catalyses IMP + L-aspartate + GTP = N(6)-(1,2-dicarboxyethyl)-AMP + GDP + phosphate + 2 H(+). It participates in purine metabolism; AMP biosynthesis via de novo pathway; AMP from IMP: step 1/2. Functionally, plays an important role in the de novo pathway and in the salvage pathway of purine nucleotide biosynthesis. Catalyzes the first committed step in the biosynthesis of AMP from IMP. The protein is Adenylosuccinate synthetase of Uncinocarpus reesii (strain UAMH 1704).